Here is a 317-residue protein sequence, read N- to C-terminus: Protein KlaC (317 aa).

Its function is as follows. Belongs to the kla operon, which is associated with cryptic tellurite resistance, and IncW plasmid fertility inhibition. The chain is Protein KlaC (klaC) from Escherichia coli.